Here is a 187-residue protein sequence, read N- to C-terminus: uncharacterized protein (187 aa).

Positions 53–187 (RKPHIYSPAD…CLQTSYVVPG (135 aa)) constitute a Tyr recombinase domain. Active-site residues include arginine 98 and lysine 123.

The protein belongs to the 'phage' integrase family.

This is an uncharacterized protein from Sinorhizobium fredii (strain NBRC 101917 / NGR234).